The chain runs to 116 residues: MANHRIDRVGMEIKREVNDILQKKVRDPRVQGVTITEVQMQGDLSLAKVYYTIMSDLASDNQKAQTGLEKATGTIKRELGKQLTMYKIPDLVFEKDNSIAYGNKIDQLLRELDNKS.

The protein belongs to the RbfA family. In terms of assembly, monomer. Binds 30S ribosomal subunits, but not 50S ribosomal subunits or 70S ribosomes.

Its subcellular location is the cytoplasm. In terms of biological role, one of several proteins that assist in the late maturation steps of the functional core of the 30S ribosomal subunit. Associates with free 30S ribosomal subunits (but not with 30S subunits that are part of 70S ribosomes or polysomes). Required for efficient processing of 16S rRNA. May interact with the 5'-terminal helix region of 16S rRNA. This chain is Ribosome-binding factor A, found in Streptococcus pyogenes serotype M5 (strain Manfredo).